The primary structure comprises 161 residues: Small ribosomal subunit protein uS9 (161 aa).

The protein belongs to the universal ribosomal protein uS9 family.

This chain is Small ribosomal subunit protein uS9, found in Rickettsia typhi (strain ATCC VR-144 / Wilmington).